Here is a 447-residue protein sequence, read N- to C-terminus: 2-oxoadipate dioxygenase/decarboxylase (447 aa).

Positions 68, 72, and 224 each coordinate 2-oxoadipate. His68 contacts Fe(2+). The Fe(2+) site is built by His224 and Glu290. Val391 contacts 2-oxoadipate.

Belongs to the 2-oxoadipate dioxygenase/decarboxylase family. Fe(2+) serves as cofactor.

The catalysed reaction is 2-oxoadipate + O2 = (R)-2-hydroxyglutarate + CO2. In terms of biological role, catalyzes the decarboxylation and hydroxylation of 2-oxoadipate (2OA) to form D-2-hydroxyglutarate (D-2-HGA). This Escherichia coli (strain K12) protein is 2-oxoadipate dioxygenase/decarboxylase (ydcJ).